Here is a 73-residue protein sequence, read N- to C-terminus: Putative defensin-like protein 42 (73 aa).

4 disulfide bridges follow: cysteine 6/cysteine 58, cysteine 18/cysteine 41, cysteine 27/cysteine 50, and cysteine 31/cysteine 52.

This sequence belongs to the DEFL family.

The sequence is that of Putative defensin-like protein 42 from Arabidopsis thaliana (Mouse-ear cress).